Consider the following 277-residue polypeptide: Phosphatidylserine decarboxylase proenzyme (277 aa).

Residues Asp88, His144, and Ser242 each act as charge relay system; for autoendoproteolytic cleavage activity in the active site. Ser242 serves as the catalytic Schiff-base intermediate with substrate; via pyruvic acid; for decarboxylase activity. Ser242 carries the post-translational modification Pyruvic acid (Ser); by autocatalysis.

The protein belongs to the phosphatidylserine decarboxylase family. PSD-B subfamily. Prokaryotic type I sub-subfamily. Heterodimer of a large membrane-associated beta subunit and a small pyruvoyl-containing alpha subunit. The cofactor is pyruvate. Post-translationally, is synthesized initially as an inactive proenzyme. Formation of the active enzyme involves a self-maturation process in which the active site pyruvoyl group is generated from an internal serine residue via an autocatalytic post-translational modification. Two non-identical subunits are generated from the proenzyme in this reaction, and the pyruvate is formed at the N-terminus of the alpha chain, which is derived from the carboxyl end of the proenzyme. The autoendoproteolytic cleavage occurs by a canonical serine protease mechanism, in which the side chain hydroxyl group of the serine supplies its oxygen atom to form the C-terminus of the beta chain, while the remainder of the serine residue undergoes an oxidative deamination to produce ammonia and the pyruvoyl prosthetic group on the alpha chain. During this reaction, the Ser that is part of the protease active site of the proenzyme becomes the pyruvoyl prosthetic group, which constitutes an essential element of the active site of the mature decarboxylase.

It is found in the cell membrane. The enzyme catalyses a 1,2-diacyl-sn-glycero-3-phospho-L-serine + H(+) = a 1,2-diacyl-sn-glycero-3-phosphoethanolamine + CO2. Its pathway is phospholipid metabolism; phosphatidylethanolamine biosynthesis; phosphatidylethanolamine from CDP-diacylglycerol: step 2/2. In terms of biological role, catalyzes the formation of phosphatidylethanolamine (PtdEtn) from phosphatidylserine (PtdSer). The sequence is that of Phosphatidylserine decarboxylase proenzyme from Psychrobacter arcticus (strain DSM 17307 / VKM B-2377 / 273-4).